The primary structure comprises 171 residues: 3-hydroxydecanoyl-[acyl-carrier-protein] dehydratase (171 aa).

Residue histidine 70 is part of the active site.

Belongs to the thioester dehydratase family. FabA subfamily. In terms of assembly, homodimer.

It is found in the cytoplasm. The enzyme catalyses a (3R)-hydroxyacyl-[ACP] = a (2E)-enoyl-[ACP] + H2O. It catalyses the reaction (3R)-hydroxydecanoyl-[ACP] = (2E)-decenoyl-[ACP] + H2O. It carries out the reaction (2E)-decenoyl-[ACP] = (3Z)-decenoyl-[ACP]. Its pathway is lipid metabolism; fatty acid biosynthesis. Its function is as follows. Necessary for the introduction of cis unsaturation into fatty acids. Catalyzes the dehydration of (3R)-3-hydroxydecanoyl-ACP to E-(2)-decenoyl-ACP and then its isomerization to Z-(3)-decenoyl-ACP. Can catalyze the dehydratase reaction for beta-hydroxyacyl-ACPs with saturated chain lengths up to 16:0, being most active on intermediate chain length. In Azotobacter vinelandii (strain DJ / ATCC BAA-1303), this protein is 3-hydroxydecanoyl-[acyl-carrier-protein] dehydratase.